Here is a 199-residue protein sequence, read N- to C-terminus: Small ribosomal subunit protein eS1 (199 aa).

Belongs to the eukaryotic ribosomal protein eS1 family.

This is Small ribosomal subunit protein eS1 from Pyrococcus horikoshii (strain ATCC 700860 / DSM 12428 / JCM 9974 / NBRC 100139 / OT-3).